A 415-amino-acid polypeptide reads, in one-letter code: Peptide chain release factor subunit 1-1 (415 aa).

It belongs to the eukaryotic release factor 1 family. In terms of assembly, heterodimer of two subunits, one of which binds GTP.

It localises to the cytoplasm. Functionally, directs the termination of nascent peptide synthesis (translation) in response to the termination codons UAA, UAG and UGA. This chain is Peptide chain release factor subunit 1-1, found in Methanosarcina acetivorans (strain ATCC 35395 / DSM 2834 / JCM 12185 / C2A).